Here is a 372-residue protein sequence, read N- to C-terminus: Flagellar P-ring protein (372 aa).

The N-terminal stretch at Met-1–Ala-26 is a signal peptide.

Belongs to the FlgI family. As to quaternary structure, the basal body constitutes a major portion of the flagellar organelle and consists of four rings (L,P,S, and M) mounted on a central rod.

It localises to the periplasm. The protein resides in the bacterial flagellum basal body. Its function is as follows. Assembles around the rod to form the L-ring and probably protects the motor/basal body from shearing forces during rotation. In Xanthomonas campestris pv. campestris (strain B100), this protein is Flagellar P-ring protein.